A 399-amino-acid polypeptide reads, in one-letter code: Succinate--CoA ligase [ADP-forming] subunit beta (399 aa).

An ATP-grasp domain is found at 9 to 254; sequence KAVLAEFGAP…ESEEDPKEIE (246 aa). Residues Lys-46, 53-55, Glu-109, Ala-112, and Glu-117 contribute to the ATP site; that span reads GRG. Mg(2+) contacts are provided by Asn-209 and Asp-223. Substrate-binding positions include Asn-274 and 331 to 333; that span reads GIM.

This sequence belongs to the succinate/malate CoA ligase beta subunit family. In terms of assembly, heterotetramer of two alpha and two beta subunits. Mg(2+) serves as cofactor.

It catalyses the reaction succinate + ATP + CoA = succinyl-CoA + ADP + phosphate. The catalysed reaction is GTP + succinate + CoA = succinyl-CoA + GDP + phosphate. It functions in the pathway carbohydrate metabolism; tricarboxylic acid cycle; succinate from succinyl-CoA (ligase route): step 1/1. Functionally, succinyl-CoA synthetase functions in the citric acid cycle (TCA), coupling the hydrolysis of succinyl-CoA to the synthesis of either ATP or GTP and thus represents the only step of substrate-level phosphorylation in the TCA. The beta subunit provides nucleotide specificity of the enzyme and binds the substrate succinate, while the binding sites for coenzyme A and phosphate are found in the alpha subunit. The protein is Succinate--CoA ligase [ADP-forming] subunit beta of Caulobacter sp. (strain K31).